We begin with the raw amino-acid sequence, 395 residues long: Cysteine synthase 2 (395 aa).

Residues 6 to 22 (QDLASGIAMGAVFMYLL) form a helical membrane-spanning segment. K83 is subject to N6-(pyridoxal phosphate)lysine. Pyridoxal 5'-phosphate is bound by residues 228-232 (GTGGT) and S335.

This sequence belongs to the cysteine synthase/cystathionine beta-synthase family. It depends on pyridoxal 5'-phosphate as a cofactor.

The protein resides in the mitochondrion. Its subcellular location is the mitochondrion outer membrane. The enzyme catalyses O-acetyl-L-serine + hydrogen sulfide = L-cysteine + acetate. Its function is as follows. Putative cysteine synthase that catalyzes the conversion of O-acetyl-L-serine (OAS) into cysteine, the last step in the cysteine biosynthesis pathway. However, in contrast to cysteine synthase cys11, this CS-like protein seems not to function in cysteine biosynthesis, at least under normal growth conditions, although the transcript is produced. This Schizosaccharomyces pombe (strain 972 / ATCC 24843) (Fission yeast) protein is Cysteine synthase 2 (cys12).